The chain runs to 906 residues: Protein translocase subunit SecA (906 aa).

ATP is bound by residues Gln89, 107 to 111 (GEGKT), and Asp501. Positions 891, 893, 902, and 903 each coordinate Zn(2+).

It belongs to the SecA family. Monomer and homodimer. Part of the essential Sec protein translocation apparatus which comprises SecA, SecYEG and auxiliary proteins SecDF-YajC and YidC. It depends on Zn(2+) as a cofactor.

The protein localises to the cell inner membrane. The protein resides in the cytoplasm. It carries out the reaction ATP + H2O + cellular proteinSide 1 = ADP + phosphate + cellular proteinSide 2.. Its function is as follows. Part of the Sec protein translocase complex. Interacts with the SecYEG preprotein conducting channel. Has a central role in coupling the hydrolysis of ATP to the transfer of proteins into and across the cell membrane, serving both as a receptor for the preprotein-SecB complex and as an ATP-driven molecular motor driving the stepwise translocation of polypeptide chains across the membrane. This Parvibaculum lavamentivorans (strain DS-1 / DSM 13023 / NCIMB 13966) protein is Protein translocase subunit SecA.